Reading from the N-terminus, the 318-residue chain is Probable cell division protein WhiA (318 aa).

A DNA-binding region (H-T-H motif) is located at residues 281 to 314 (SLKELGQMLVPPVGKSGVNHRLRKIEEISKKLKE).

The protein belongs to the WhiA family.

Functionally, involved in cell division and chromosome segregation. The sequence is that of Probable cell division protein WhiA from Thermoanaerobacter pseudethanolicus (strain ATCC 33223 / 39E) (Clostridium thermohydrosulfuricum).